The sequence spans 383 residues: Dynein axonemal assembly factor 11 (383 aa).

4 LRR repeats span residues 20–45 (LSNL…ACRE), 46–66 (LEIL…QHLK), 67–89 (YLKY…GCEA), and 90–110 (LERL…ERLR). The 19-residue stretch at 128-146 (VAGYRAYVVHALPQLRELD) folds into the LRRCT domain. A disordered region spans residues 201 to 244 (KGERLYGHTPEERLQMLREKEEEERRKREEQRERERSSQFGAIR). Residues 211 to 239 (EERLQMLREKEEEERRKREEQRERERSSQ) adopt a coiled-coil conformation.

It belongs to the tilB family.

It is found in the cytoplasm. The protein resides in the cytoskeleton. Its subcellular location is the flagellum basal body. In terms of biological role, involved in the regulation of the cell cycle; is required for the basal body replication and new flagellum biogenesis. The sequence is that of Dynein axonemal assembly factor 11 (dnaaf11) from Trypanosoma brucei brucei.